A 250-amino-acid polypeptide reads, in one-letter code: MSDDLDVLWISSSPVLQRFDKPLLQYISKDVNVAQWEYRHHRDEGSSIDEAVDLLAEFMGQCPYPVNLAGHAAGGAIALSFARRYPKKVRSLSLLAVASQPANTWHAHYYLQRQLFTISREQILANTVRNLFGEQPSHTTKKLVAVLDRDLEQSPLLHSLFKLVHLPEGGVNMPLMICGSKNDPIVSSTTLQDWSNCLKPEDHLWECPKGHHFFHYFYPQTVGDQLLNFWQLRHLQPMQTSYLVSHHWQN.

The protein to Synechocystis PCC 6803 sll0249.

This is an uncharacterized protein from Nostoc sp. (strain PCC 7120 / SAG 25.82 / UTEX 2576).